A 152-amino-acid chain; its full sequence is Bacchus (152 aa).

Over residues 29–41 (DLKAKAAAEDKAA) the composition is skewed to basic and acidic residues. A disordered region spans residues 29-152 (DLKAKAAAED…DDGSGSDDQA (124 aa)). Residues 42 to 51 (AADAAGDAAD) show a composition bias toward low complexity. The segment covering 72-89 (ESVKGTKRPAEAKSAESK) has biased composition (basic and acidic residues). The span at 99 to 152 (GDSDEEEALEEIIEGDSEIESDEYDIPYDGEEDDIECDDDDDDNDDGSGSDDQA) shows a compositional bias: acidic residues.

As to expression, expressed in the brain.

It is found in the nucleus. Negatively regulates tyramine beta-hydroxylase tbh and thus the conversion of tyramine (TA) to octopamine (OA). In tyrosine decarboxylase 2 (Tdc2) neurons, acts in an amine-mediated signaling pathway to negatively regulate acute ethanol sensitivity probably via tbh-mediated depletion of TA. This Drosophila melanogaster (Fruit fly) protein is Bacchus.